We begin with the raw amino-acid sequence, 138 residues long: Small ribosomal subunit protein uS9 (138 aa).

The tract at residues 99 to 138 is disordered; it reads DPDNRPPLKTEGYLTRDPRAKERKKYGLHKARKAPQYSKR. The span at 100–118 shows a compositional bias: basic and acidic residues; it reads PDNRPPLKTEGYLTRDPRA. Positions 119–138 are enriched in basic residues; that stretch reads KERKKYGLHKARKAPQYSKR.

It belongs to the universal ribosomal protein uS9 family.

The chain is Small ribosomal subunit protein uS9 from Nostoc punctiforme (strain ATCC 29133 / PCC 73102).